The chain runs to 238 residues: Probable 2-phosphosulfolactate phosphatase (238 aa).

The protein belongs to the ComB family. Mg(2+) is required as a cofactor.

The catalysed reaction is (2R)-O-phospho-3-sulfolactate + H2O = (2R)-3-sulfolactate + phosphate. This Clostridium beijerinckii (strain ATCC 51743 / NCIMB 8052) (Clostridium acetobutylicum) protein is Probable 2-phosphosulfolactate phosphatase.